A 237-amino-acid polypeptide reads, in one-letter code: Pyridoxal phosphate homeostasis protein (237 aa).

Lys35 is subject to N6-(pyridoxal phosphate)lysine.

Belongs to the pyridoxal phosphate-binding protein YggS/PROSC family.

Pyridoxal 5'-phosphate (PLP)-binding protein, which is involved in PLP homeostasis. This is Pyridoxal phosphate homeostasis protein from Haemophilus influenzae (strain ATCC 51907 / DSM 11121 / KW20 / Rd).